We begin with the raw amino-acid sequence, 391 residues long: S-adenosylmethionine synthase (391 aa).

His-14 serves as a coordination point for ATP. Asp-16 lines the Mg(2+) pocket. Glu-42 is a K(+) binding site. Glu-55 and Gln-98 together coordinate L-methionine. The interval 98–108 (QSVDIAMGVDE) is flexible loop. ATP contacts are provided by residues 172-174 (DGK), 238-239 (RF), Asp-247, 253-254 (RK), Ala-270, and Lys-274. Asp-247 contributes to the L-methionine binding site. Residue Lys-278 participates in L-methionine binding.

It belongs to the AdoMet synthase family. As to quaternary structure, homotetramer; dimer of dimers. It depends on Mg(2+) as a cofactor. K(+) serves as cofactor.

Its subcellular location is the cytoplasm. The enzyme catalyses L-methionine + ATP + H2O = S-adenosyl-L-methionine + phosphate + diphosphate. It participates in amino-acid biosynthesis; S-adenosyl-L-methionine biosynthesis; S-adenosyl-L-methionine from L-methionine: step 1/1. Functionally, catalyzes the formation of S-adenosylmethionine (AdoMet) from methionine and ATP. The overall synthetic reaction is composed of two sequential steps, AdoMet formation and the subsequent tripolyphosphate hydrolysis which occurs prior to release of AdoMet from the enzyme. This Clostridium botulinum (strain Kyoto / Type A2) protein is S-adenosylmethionine synthase.